The sequence spans 187 residues: Guanylate kinase (187 aa).

Position 2 is an N-acetylserine (Ser-2). The 183-residue stretch at 2-184 (SRPIVISGPS…AYKELKDFIF (183 aa)) folds into the Guanylate kinase-like domain. 9–16 (GPSGTGKS) contributes to the ATP binding site. GMP-binding positions include Ser-35, 39 to 42 (RTPR), Tyr-51, Glu-70, 79 to 81 (YGS), and Asp-101. A Phosphoserine modification is found at Ser-149. Residue Tyr-157 is modified to Phosphotyrosine.

It belongs to the guanylate kinase family. In terms of assembly, monomer.

It carries out the reaction GMP + ATP = GDP + ADP. Its function is as follows. Catalyzes the reversible transfer of the terminal phosphoryl group of ATP to the acceptor molecule GMP. Essential for recycling GMP and indirectly, cGMP. In Saccharomyces cerevisiae (strain ATCC 204508 / S288c) (Baker's yeast), this protein is Guanylate kinase (GUK1).